Here is a 25-residue protein sequence, read N- to C-terminus: Non-specific lipid-transfer protein 3 (25 aa).

In terms of tissue distribution, seeds (at protein level).

Plant non-specific lipid-transfer proteins transfer phospholipids as well as galactolipids across membranes. May play a role in wax or cutin deposition in the cell walls of expanding epidermal cells and certain secretory tissues. Has antibacterial and antifungal activity. Displays antibacterial activity towards both Gram-negative bacteria, P.carotovorum (IC(50)=11.5 uM) and P.syringae (IC(50)=12.0 uM), and Gram-positive bacterium C.michiganensis subsp michiganense (IC(50)=11.2 uM). Also displays antifungal activity towards A.niger VKM F-33 (IC(50)=1.05 uM) and B.cinerea TSKHA (IC(50)=1.88 uM) and relatively moderate activity towards B.sorokiniana VKM F-1448 (IC(50)=1.55 uM). Displays some inhibitory activity towards P.infestans OSV12. This chain is Non-specific lipid-transfer protein 3, found in Nigella sativa (Black cumin).